The chain runs to 497 residues: Dihydrolipoyl dehydrogenase (497 aa).

FAD-binding positions include 60–69, Lys78, Gly142, and 170–172; these read EKEPSLGGTC and TGS. Residues Cys69 and Cys74 are joined by a disulfide bond. NAD(+) is bound by residues 207-214, Glu230, Val264, and Gly302; that span reads GAGVIGLE. FAD is bound by residues Asp343 and 349 to 352; that span reads MLAH. His475 functions as the Proton acceptor in the catalytic mechanism.

Belongs to the class-I pyridine nucleotide-disulfide oxidoreductase family. Homodimer. The cofactor is FAD.

It is found in the cytoplasm. The catalysed reaction is N(6)-[(R)-dihydrolipoyl]-L-lysyl-[protein] + NAD(+) = N(6)-[(R)-lipoyl]-L-lysyl-[protein] + NADH + H(+). In Manduca sexta (Tobacco hawkmoth), this protein is Dihydrolipoyl dehydrogenase.